The sequence spans 101 residues: Protein Tat (101 aa).

The segment at 1–24 is interaction with human CREBBP; it reads MEPVDPSLDPWNHPGSQPTTPCTK. Positions 1–48 are transactivation; the sequence is MEPVDPSLDPWNHPGSQPTTPCTKCYCKRCCFHCQWCFTTKGLGISYG. Residues C22, C25, and C27 each contribute to the Zn(2+) site. Positions 22 to 37 are cysteine-rich; it reads CTKCYCKRCCFHCQWC. At K28 the chain carries N6-acetyllysine; by host PCAF. C30, H33, C34, and C37 together coordinate Zn(2+). The segment at 38-48 is core; sequence FTTKGLGISYG. Basic residues predominate over residues 48–58; that stretch reads GRKKRRQRHRT. Residues 48-101 form a disordered region; it reads GRKKRRQRHRTPQSSQVHQNSLPKQPLSQARGDPTGPKESKKEVESKAKTDPCA. Positions 49-57 match the Nuclear localization signal, RNA-binding (TAR), and protein transduction motif; that stretch reads RKKRRQRHR. The tract at residues 49–86 is interaction with the host capping enzyme RNGTT; the sequence is RKKRRQRHRTPQSSQVHQNSLPKQPLSQARGDPTGPKE. N6-acetyllysine; by host EP300 and GCN5L2 occurs at positions 50 and 51. Asymmetric dimethylarginine; by host PRMT6 occurs at positions 52 and 53. The span at 59–75 shows a compositional bias: polar residues; that stretch reads PQSSQVHQNSLPKQPLS. K71 is covalently cross-linked (Glycyl lysine isopeptide (Lys-Gly) (interchain with G-Cter in ubiquitin)). Residues 78 to 80 carry the Cell attachment site motif; that stretch reads RGD. The segment covering 83–101 has biased composition (basic and acidic residues); it reads GPKESKKEVESKAKTDPCA.

This sequence belongs to the lentiviruses Tat family. As to quaternary structure, interacts with host CCNT1. Associates with the P-TEFb complex composed at least of Tat, P-TEFb (CDK9 and CCNT1), TAR RNA, RNA Pol II. Recruits the HATs CREBBP, TAF1/TFIID, EP300, PCAF and GCN5L2. Interacts with host KAT5/Tip60; this interaction targets the latter to degradation. Interacts with the host deacetylase SIRT1. Interacts with host capping enzyme RNGTT; this interaction stimulates RNGTT. Binds to host KDR, and to the host integrins ITGAV/ITGB3 and ITGA5/ITGB1. Interacts with host KPNB1/importin beta-1 without previous binding to KPNA1/importin alpha-1. Interacts with EIF2AK2. Interacts with host nucleosome assembly protein NAP1L1; this interaction may be required for the transport of Tat within the nucleus, since the two proteins interact at the nuclear rim. Interacts with host C1QBP/SF2P32; this interaction involves lysine-acetylated Tat. Interacts with the host chemokine receptors CCR2, CCR3 and CXCR4. Interacts with host DPP4/CD26; this interaction may trigger an anti-proliferative effect. Interacts with host LDLR. Interacts with the host extracellular matrix metalloproteinase MMP1. Interacts with host PRMT6; this interaction mediates Tat's methylation. Interacts with, and is ubiquitinated by MDM2/Hdm2. Interacts with host PSMC3 and HTATIP2. Interacts with STAB1; this interaction may overcome SATB1-mediated repression of IL2 and IL2RA (interleukin) in T cells by binding to the same domain than HDAC1. Interacts (when acetylated) with human CDK13, thereby increasing HIV-1 mRNA splicing and promoting the production of the doubly spliced HIV-1 protein Nef. Interacts with host TBP; this interaction modulates the activity of transcriptional pre-initiation complex. Interacts with host RELA. Interacts with host PLSCR1; this interaction negatively regulates Tat transactivation activity by altering its subcellular distribution. Post-translationally, asymmetrical arginine methylation by host PRMT6 seems to diminish the transactivation capacity of Tat and affects the interaction with host CCNT1. Acetylation by EP300, CREBBP, GCN5L2/GCN5 and PCAF regulates the transactivation activity of Tat. EP300-mediated acetylation of Lys-50 promotes dissociation of Tat from the TAR RNA through the competitive binding to PCAF's bromodomain. In addition, the non-acetylated Tat's N-terminus can also interact with PCAF. PCAF-mediated acetylation of Lys-28 enhances Tat's binding to CCNT1. Lys-50 is deacetylated by SIRT1. In terms of processing, polyubiquitination by host MDM2 does not target Tat to degradation, but activates its transactivation function and fosters interaction with CCNT1 and TAR RNA. Post-translationally, phosphorylated by EIF2AK2 on serine and threonine residues adjacent to the basic region important for TAR RNA binding and function. Phosphorylation of Tat by EIF2AK2 is dependent on the prior activation of EIF2AK2 by dsRNA.

The protein resides in the host nucleus. It localises to the host nucleolus. Its subcellular location is the host cytoplasm. The protein localises to the secreted. Its function is as follows. Transcriptional activator that increases RNA Pol II processivity, thereby increasing the level of full-length viral transcripts. Recognizes a hairpin structure at the 5'-LTR of the nascent viral mRNAs referred to as the transactivation responsive RNA element (TAR) and recruits the cyclin T1-CDK9 complex (P-TEFb complex) that will in turn hyperphosphorylate the RNA polymerase II to allow efficient elongation. The CDK9 component of P-TEFb and other Tat-activated kinases hyperphosphorylate the C-terminus of RNA Pol II that becomes stabilized and much more processive. Other factors such as HTATSF1/Tat-SF1, SUPT5H/SPT5, and HTATIP2 are also important for Tat's function. Besides its effect on RNA Pol II processivity, Tat induces chromatin remodeling of proviral genes by recruiting the histone acetyltransferases (HATs) CREBBP, EP300 and PCAF to the chromatin. This also contributes to the increase in proviral transcription rate, especially when the provirus integrates in transcriptionally silent region of the host genome. To ensure maximal activation of the LTR, Tat mediates nuclear translocation of NF-kappa-B by interacting with host RELA. Through its interaction with host TBP, Tat may also modulate transcription initiation. Tat can reactivate a latently infected cell by penetrating in it and transactivating its LTR promoter. In the cytoplasm, Tat is thought to act as a translational activator of HIV-1 mRNAs. In terms of biological role, extracellular circulating Tat can be endocytosed by surrounding uninfected cells via the binding to several surface receptors such as CD26, CXCR4, heparan sulfate proteoglycans (HSPG) or LDLR. Neurons are rarely infected, but they internalize Tat via their LDLR. Through its interaction with nuclear HATs, Tat is potentially able to control the acetylation-dependent cellular gene expression. Modulates the expression of many cellular genes involved in cell survival, proliferation or in coding for cytokines or cytokine receptors. Tat plays a role in T-cell and neurons apoptosis. Tat induced neurotoxicity and apoptosis probably contribute to neuroAIDS. Circulating Tat also acts as a chemokine-like and/or growth factor-like molecule that binds to specific receptors on the surface of the cells, affecting many cellular pathways. In the vascular system, Tat binds to ITGAV/ITGB3 and ITGA5/ITGB1 integrins dimers at the surface of endothelial cells and competes with bFGF for heparin-binding sites, leading to an excess of soluble bFGF. The sequence is that of Protein Tat from Human immunodeficiency virus type 1 group M subtype F1 (isolate VI850) (HIV-1).